A 276-amino-acid chain; its full sequence is Putative hydro-lyase Xaut_1503 (276 aa).

This sequence belongs to the D-glutamate cyclase family.

The polypeptide is Putative hydro-lyase Xaut_1503 (Xanthobacter autotrophicus (strain ATCC BAA-1158 / Py2)).